Reading from the N-terminus, the 210-residue chain is Uracil phosphoribosyltransferase (210 aa).

Residues arginine 78, arginine 103, and 130–138 (DPMLATGGS) contribute to the 5-phospho-alpha-D-ribose 1-diphosphate site. Residues isoleucine 193 and 198 to 200 (GDA) contribute to the uracil site. Aspartate 199 contacts 5-phospho-alpha-D-ribose 1-diphosphate.

This sequence belongs to the UPRTase family. Mg(2+) is required as a cofactor.

It catalyses the reaction UMP + diphosphate = 5-phospho-alpha-D-ribose 1-diphosphate + uracil. Its pathway is pyrimidine metabolism; UMP biosynthesis via salvage pathway; UMP from uracil: step 1/1. With respect to regulation, allosterically activated by GTP. Catalyzes the conversion of uracil and 5-phospho-alpha-D-ribose 1-diphosphate (PRPP) to UMP and diphosphate. The protein is Uracil phosphoribosyltransferase of Salinibacter ruber (strain DSM 13855 / M31).